The primary structure comprises 278 residues: ATP synthase subunit delta (278 aa).

This sequence belongs to the ATPase delta chain family. F-type ATPases have 2 components, F(1) - the catalytic core - and F(0) - the membrane proton channel. F(1) has five subunits: alpha(3), beta(3), gamma(1), delta(1), epsilon(1). F(0) has three main subunits: a(1), b(2) and c(10-14). The alpha and beta chains form an alternating ring which encloses part of the gamma chain. F(1) is attached to F(0) by a central stalk formed by the gamma and epsilon chains, while a peripheral stalk is formed by the delta and b chains.

The protein resides in the cell membrane. Functionally, f(1)F(0) ATP synthase produces ATP from ADP in the presence of a proton or sodium gradient. F-type ATPases consist of two structural domains, F(1) containing the extramembraneous catalytic core and F(0) containing the membrane proton channel, linked together by a central stalk and a peripheral stalk. During catalysis, ATP synthesis in the catalytic domain of F(1) is coupled via a rotary mechanism of the central stalk subunits to proton translocation. This protein is part of the stalk that links CF(0) to CF(1). It either transmits conformational changes from CF(0) to CF(1) or is implicated in proton conduction. The sequence is that of ATP synthase subunit delta from Bifidobacterium longum subsp. infantis (strain ATCC 15697 / DSM 20088 / JCM 1222 / NCTC 11817 / S12).